The sequence spans 318 residues: Acetyl-coenzyme A carboxylase carboxyl transferase subunit alpha (318 aa).

The CoA carboxyltransferase C-terminal domain maps to 31 to 292 (DLTNEIEKLE…NKTITKSLHA (262 aa)).

It belongs to the AccA family. As to quaternary structure, acetyl-CoA carboxylase is a heterohexamer composed of biotin carboxyl carrier protein (AccB), biotin carboxylase (AccC) and two subunits each of ACCase subunit alpha (AccA) and ACCase subunit beta (AccD).

The protein resides in the cytoplasm. It catalyses the reaction N(6)-carboxybiotinyl-L-lysyl-[protein] + acetyl-CoA = N(6)-biotinyl-L-lysyl-[protein] + malonyl-CoA. It functions in the pathway lipid metabolism; malonyl-CoA biosynthesis; malonyl-CoA from acetyl-CoA: step 1/1. In terms of biological role, component of the acetyl coenzyme A carboxylase (ACC) complex. First, biotin carboxylase catalyzes the carboxylation of biotin on its carrier protein (BCCP) and then the CO(2) group is transferred by the carboxyltransferase to acetyl-CoA to form malonyl-CoA. In Listeria monocytogenes serotype 4a (strain HCC23), this protein is Acetyl-coenzyme A carboxylase carboxyl transferase subunit alpha.